Here is a 156-residue protein sequence, read N- to C-terminus: Large ribosomal subunit protein eL24 (156 aa).

Basic and acidic residues predominate over residues 110 to 129 (KESKAKKQETQAAKKAEKAK). Residues 110–156 (KESKAKKQETQAAKKAEKAKNAANPKARVTSKQGAKGAPVKVAAKSR) are disordered. A compositionally biased stretch (low complexity) spans 130–156 (NAANPKARVTSKQGAKGAPVKVAAKSR).

The protein belongs to the eukaryotic ribosomal protein eL24 family. Component of the large ribosomal subunit (LSU). Mature N.crassa ribosomes consist of a small (40S) and a large (60S) subunit. The 40S small subunit contains 1 molecule of ribosomal RNA (18S rRNA) and at least 32 different proteins. The large 60S subunit contains 3 rRNA molecules (26S, 5.8S and 5S rRNA) and at least 42 different proteins.

The protein localises to the cytoplasm. Component of the ribosome, a large ribonucleoprotein complex responsible for the synthesis of proteins in the cell. The small ribosomal subunit (SSU) binds messenger RNAs (mRNAs) and translates the encoded message by selecting cognate aminoacyl-transfer RNA (tRNA) molecules. The large subunit (LSU) contains the ribosomal catalytic site termed the peptidyl transferase center (PTC), which catalyzes the formation of peptide bonds, thereby polymerizing the amino acids delivered by tRNAs into a polypeptide chain. The nascent polypeptides leave the ribosome through a tunnel in the LSU and interact with protein factors that function in enzymatic processing, targeting, and the membrane insertion of nascent chains at the exit of the ribosomal tunnel. The sequence is that of Large ribosomal subunit protein eL24 (rpl-24) from Neurospora crassa (strain ATCC 24698 / 74-OR23-1A / CBS 708.71 / DSM 1257 / FGSC 987).